A 1363-amino-acid chain; its full sequence is Spike glycoprotein (1363 aa).

Positions 1–13 (MFLILLISLPMAF) are cleaved as a signal peptide. Residues 14–1307 (AVIGDLKCTT…GTYEYYVKWP (1294 aa)) lie on the Extracellular side of the membrane. Positions 15 to 298 (VIGDLKCTTV…DFMSEIKCKT (284 aa)) constitute a BetaCoV S1-NTD domain. Cystine bridges form between cysteine 21/cysteine 165, cysteine 160/cysteine 193, cysteine 172/cysteine 252, cysteine 286/cysteine 296, and cysteine 331/cysteine 356. N-linked (GlcNAc...) asparagine; by host glycans are attached at residues asparagine 59 and asparagine 133. Asparagine 198 carries N-linked (GlcNAc...) asparagine; by host glycosylation. The 289-residue stretch at 329 to 617 (PDCNIEAWLN…DVNSGTTCST (289 aa)) folds into the BetaCoV S1-CTD domain. The N-linked (GlcNAc...) asparagine; by host glycan is linked to asparagine 359. Intrachain disulfides connect cysteine 374-cysteine 427 and cysteine 386-cysteine 615. 7 N-linked (GlcNAc...) asparagine; by host glycosylation sites follow: asparagine 437, asparagine 649, asparagine 676, asparagine 696, asparagine 714, asparagine 739, and asparagine 788. 2 fusion peptide regions span residues 914 to 935 (SAIE…VEAY) and 933 to 953 (EAYN…VQSY). Asparagine 937 carries N-linked (GlcNAc...) asparagine; by host glycosylation. The cysteines at positions 938 and 949 are disulfide-linked. Residues 1014-1064 (QKLIANAFNNALDAIQEGFDATNSALVKIQAVVNANAEALNNLLQQLSNRF) are heptad repeat 1. The stretch at 1043 to 1087 (QAVVNANAEALNNLLQQLSNRFGAISSSLQEILSRLDALEAQAQI) forms a coiled coil. N-linked (GlcNAc...) asparagine; by host glycosylation is found at asparagine 1194, asparagine 1224, asparagine 1234, asparagine 1253, asparagine 1267, and asparagine 1288. The tract at residues 1258–1296 (APDLSLDYINVTFLDLQDEMNRLQEAIKVLNQSYINLKD) is heptad repeat 2. The stretch at 1269–1297 (TFLDLQDEMNRLQEAIKVLNQSYINLKDI) forms a coiled coil. A helical transmembrane segment spans residues 1308 to 1328 (WYVWLLIGFAGVAMLVLLFFI). Topologically, residues 1329–1363 (CCCTGCGTSCFKICGGCCDDYTGHQELVIKTSHDD) are cytoplasmic. The short motif at 1359-1363 (TSHDD) is the KxHxx element.

The protein belongs to the betacoronaviruses spike protein family. In terms of assembly, homotrimer; each monomer consists of a S1 and a S2 subunit. The resulting peplomers protrude from the virus surface as spikes. Specific enzymatic cleavages in vivo yield mature proteins. The precursor is processed into S1 and S2 by host cell furin or another cellular protease to yield the mature S1 and S2 proteins. Additionally, a second cleavage leads to the release of a fusion peptide after viral attachment to host cell receptor. In terms of processing, the cytoplasmic Cys-rich domain is palmitoylated. Spike glycoprotein is digested within host endosomes.

It localises to the virion membrane. Its subcellular location is the host endoplasmic reticulum-Golgi intermediate compartment membrane. The protein resides in the host cell membrane. Attaches the virion to the cell membrane by interacting with host receptor, initiating the infection. Its function is as follows. Mediates fusion of the virion and cellular membranes by acting as a class I viral fusion protein. Under the current model, the protein has at least three conformational states: pre-fusion native state, pre-hairpin intermediate state, and post-fusion hairpin state. During viral and target cell membrane fusion, the coiled coil regions (heptad repeats) assume a trimer-of-hairpins structure, positioning the fusion peptide in close proximity to the C-terminal region of the ectodomain. The formation of this structure appears to drive apposition and subsequent fusion of viral and target cell membranes. Functionally, acts as a viral fusion peptide which is unmasked following S2 cleavage occurring upon virus endocytosis. The polypeptide is Spike glycoprotein (Bos taurus (Bovine)).